Consider the following 479-residue polypeptide: Adenosylhomocysteinase (479 aa).

Thr-65, Asp-144, and Glu-204 together coordinate substrate. 205–207 (TTT) serves as a coordination point for NAD(+). Lys-234 and Asp-238 together coordinate substrate. Residues Asn-239, 268–273 (GYGDVG), Glu-291, Asn-326, 347–349 (IGH), and Asn-392 contribute to the NAD(+) site.

This sequence belongs to the adenosylhomocysteinase family. It depends on NAD(+) as a cofactor.

The protein resides in the cytoplasm. It catalyses the reaction S-adenosyl-L-homocysteine + H2O = L-homocysteine + adenosine. It participates in amino-acid biosynthesis; L-homocysteine biosynthesis; L-homocysteine from S-adenosyl-L-homocysteine: step 1/1. In terms of biological role, may play a key role in the regulation of the intracellular concentration of adenosylhomocysteine. This is Adenosylhomocysteinase from Variovorax paradoxus (strain S110).